The chain runs to 547 residues: CTP synthase (547 aa).

The tract at residues 1–265 is amidoligase domain; that stretch reads MARYIFITGG…DQAVLDAFQI (265 aa). Ser13 lines the CTP pocket. Residue Ser13 participates in UTP binding. Residues 14 to 19 and Asp71 each bind ATP; that span reads SLGKGL. Residues Asp71 and Glu139 each coordinate Mg(2+). Residues 146–148, 186–191, and Lys222 each bind CTP; these read DIE and KTKPTQ. Residues 186-191 and Lys222 contribute to the UTP site; that span reads KTKPTQ. The Glutamine amidotransferase type-1 domain occupies 291–546; the sequence is RIAVVGKYTQ…IRAAMDNERL (256 aa). Gly352 provides a ligand contact to L-glutamine. The active-site Nucleophile; for glutamine hydrolysis is the Cys379. Residues 380–383, Glu403, and Arg474 each bind L-glutamine; that span reads LGMQ. Residues His519 and Glu521 contribute to the active site.

It belongs to the CTP synthase family. As to quaternary structure, homotetramer.

It carries out the reaction UTP + L-glutamine + ATP + H2O = CTP + L-glutamate + ADP + phosphate + 2 H(+). The catalysed reaction is L-glutamine + H2O = L-glutamate + NH4(+). It catalyses the reaction UTP + NH4(+) + ATP = CTP + ADP + phosphate + 2 H(+). It functions in the pathway pyrimidine metabolism; CTP biosynthesis via de novo pathway; CTP from UDP: step 2/2. With respect to regulation, allosterically activated by GTP, when glutamine is the substrate; GTP has no effect on the reaction when ammonia is the substrate. The allosteric effector GTP functions by stabilizing the protein conformation that binds the tetrahedral intermediate(s) formed during glutamine hydrolysis. Inhibited by the product CTP, via allosteric rather than competitive inhibition. In terms of biological role, catalyzes the ATP-dependent amination of UTP to CTP with either L-glutamine or ammonia as the source of nitrogen. Regulates intracellular CTP levels through interactions with the four ribonucleotide triphosphates. In Paracoccus denitrificans (strain Pd 1222), this protein is CTP synthase.